Reading from the N-terminus, the 591-residue chain is Aspartate--tRNA(Asp/Asn) ligase (591 aa).

L-aspartate is bound at residue E175. The tract at residues 199–202 is aspartate; that stretch reads QQFK. L-aspartate is bound by residues R221 and H453. 221–223 is a binding site for ATP; the sequence is RDE. E486 contacts ATP. Residue R493 participates in L-aspartate binding. 538–541 is an ATP binding site; that stretch reads GIDR.

It belongs to the class-II aminoacyl-tRNA synthetase family. Type 1 subfamily. Homodimer.

It localises to the cytoplasm. It catalyses the reaction tRNA(Asx) + L-aspartate + ATP = L-aspartyl-tRNA(Asx) + AMP + diphosphate. In terms of biological role, aspartyl-tRNA synthetase with relaxed tRNA specificity since it is able to aspartylate not only its cognate tRNA(Asp) but also tRNA(Asn). Reaction proceeds in two steps: L-aspartate is first activated by ATP to form Asp-AMP and then transferred to the acceptor end of tRNA(Asp/Asn). The protein is Aspartate--tRNA(Asp/Asn) ligase of Roseobacter denitrificans (strain ATCC 33942 / OCh 114) (Erythrobacter sp. (strain OCh 114)).